We begin with the raw amino-acid sequence, 247 residues long: 5'-nucleotidase SurE (247 aa).

A divalent metal cation contacts are provided by aspartate 8, aspartate 9, serine 39, and asparagine 91.

The protein belongs to the SurE nucleotidase family. A divalent metal cation serves as cofactor.

The protein resides in the cytoplasm. The enzyme catalyses a ribonucleoside 5'-phosphate + H2O = a ribonucleoside + phosphate. Functionally, nucleotidase that shows phosphatase activity on nucleoside 5'-monophosphates. This is 5'-nucleotidase SurE from Aromatoleum aromaticum (strain DSM 19018 / LMG 30748 / EbN1) (Azoarcus sp. (strain EbN1)).